The following is a 1475-amino-acid chain: Alpha-glucan water dikinase, chloroplastic (1475 aa).

The N-terminal 85 residues, 1–85, are a transit peptide targeting the chloroplast; the sequence is MSNSIGRNVL…HRPVLITPRA (85 aa). His-1077 acts as the Tele-phosphohistidine intermediate in catalysis.

It belongs to the PEP-utilizing enzyme family. In terms of assembly, homodimer. Mg(2+) is required as a cofactor.

It localises to the plastid. Its subcellular location is the chloroplast. The enzyme catalyses [(1-&gt;4)-alpha-D-glucosyl](n) + n ATP + n H2O = [(1-&gt;4)-6-phospho-alpha-D-glucosyl](n) + n AMP + n phosphate + 2n H(+). Mediates the incorporation of phosphate into starch-like alpha-glucan, mostly at the C-6 position of glucose units. Acts as an overall regulator of starch mobilization. Required for starch degradation, suggesting that the phosphate content of starch regulates its degradability. In Citrus reticulata (Tangerine), this protein is Alpha-glucan water dikinase, chloroplastic (R1).